An 827-amino-acid chain; its full sequence is Protein Jade-1 (827 aa).

The disordered stretch occupies residues Met1–His35. Polar residues predominate over residues Asn16–Leu30. The segment at Asp200–Gly250 adopts a PHD-type 1 zinc-finger fold. The C2HC pre-PHD-type zinc finger occupies Gln252–Val286. Residues Leu310 to Gly366 form a PHD-type 2 zinc finger. Disordered stretches follow at residues Thr622 to Leu705 and Arg769 to Ser810. Composition is skewed to basic and acidic residues over residues Ser646–Leu661 and Lys669–Arg682. The segment covering Ala692 to Leu705 has biased composition (polar residues).

It belongs to the JADE family. Component of the HBO1 complex composed.

It is found in the nucleus. The protein resides in the chromosome. The protein localises to the cytoplasm. It localises to the cytoskeleton. Its subcellular location is the cilium basal body. In terms of biological role, scaffold subunit of some HBO1 complexes, which have a histone H4 acetyltransferase activity. Plays a key role in HBO1 complex by directing KAT7/HBO1 specificity towards histone H4 acetylation (H4K5ac, H4K8ac and H4K12ac), regulating DNA replication initiation, regulating DNA replication initiation. The protein is Protein Jade-1 (jade1) of Xenopus laevis (African clawed frog).